A 675-amino-acid chain; its full sequence is G-protein coupled receptor moody (675 aa).

At 1–44 (MSDETTGSLGDAFSPMDTPTTTIMPPPADVDESGFSHSLLTFAA) the chain is on the extracellular side. A helical transmembrane segment spans residues 45–65 (VMTFLIMIVGICGNLLTVVAL). Residues 66–73 (LKCPKVRN) are Cytoplasmic-facing. A helical membrane pass occupies residues 74–94 (VAAAFIISLCIADLLFCALVL). Residues 95–115 (PFQGLRFVQGTWRHGEVLCRL) are Extracellular-facing. A disulfide bond links cysteine 113 and cysteine 192. The helical transmembrane segment at 116 to 136 (IPFIQYGNIGVSLLCIAMITI) threads the bilayer. Over 137–156 (NRYVMITHYSLYNRIYKRHW) the chain is Cytoplasmic. A helical membrane pass occupies residues 157-177 (IAIMIAACWLFSYGMQLPTLL). The Extracellular portion of the chain corresponds to 178-206 (GAWGRFGYDARLQTCSIMSDRHGHSSKTT). Residues 207–227 (LFITAFVIPCLVIIACYAKIF) traverse the membrane as a helical segment. The Cytoplasmic segment spans residues 228–327 (WVVHKSEQRL…AKRNEWRITK (100 aa)). Residues 258 to 316 (TSMPSGDGANPSQVPAGCRVSSDSSSNYSTDVPDTTPGGAGGGAGVKQQPSRVKDQREV) are disordered. Over residues 278–294 (SSDSSSNYSTDVPDTTP) the composition is skewed to low complexity. The chain crosses the membrane as a helical span at residues 328–348 (MVLAIFLSFVICYLPITIVKV). The Extracellular segment spans residues 349-359 (ADKDVEHPSLH). The helical transmembrane segment at 360–380 (IFSYIMLYLSACINPIIYVIM) threads the bilayer. Residues 381 to 675 (NKQYRKAYKT…LMDKKKFPKD (295 aa)) are Cytoplasmic-facing. Disordered stretches follow at residues 475 to 568 (SKSS…GNGS) and 588 to 675 (LPPT…FPKD). Positions 536-551 (SSVISANPSSSPSPSS) are enriched in low complexity. Positions 552–565 (SGGGIYRPGIGSMG) are enriched in gly residues. A compositionally biased stretch (basic and acidic residues) spans 666–675 (LMDKKKFPKD).

The protein belongs to the G-protein coupled receptor 1 family.

The protein resides in the cell membrane. Functionally, required in glia to regulate the acute sensitivity to cocaine and to continuously maintain the proper blood-brain barrier (BBB) function. A moody-mediated signaling pathway functions in glia to regulate nervous system insulation and drug-related behaviors. The chain is G-protein coupled receptor moody from Drosophila pseudoobscura pseudoobscura (Fruit fly).